The sequence spans 156 residues: Small ribosomal subunit protein uS7 (156 aa).

The protein belongs to the universal ribosomal protein uS7 family. In terms of assembly, part of the 30S ribosomal subunit. Contacts proteins S9 and S11.

Its function is as follows. One of the primary rRNA binding proteins, it binds directly to 16S rRNA where it nucleates assembly of the head domain of the 30S subunit. Is located at the subunit interface close to the decoding center, probably blocks exit of the E-site tRNA. The sequence is that of Small ribosomal subunit protein uS7 from Shewanella sp. (strain MR-7).